A 519-amino-acid polypeptide reads, in one-letter code: T-complex protein 11-like protein 2 (519 aa).

Residues 1-57 (MPFNGEKQCVSEDQPSDSDSSRFSESMASLSDYECSRQSFTSDSSSKSSSPASTSPP) form a disordered region. S16 is modified (phosphoserine). Low complexity-rich tracts occupy residues 17–29 (DSDS…SMAS) and 36–55 (SRQS…ASTS).

This sequence belongs to the TCP11 family. In terms of assembly, interacts with FMNL2; this interaction promotes muscle-derived satellite cell (MDSC) migration and differentiation.

It localises to the cytoplasm. The protein localises to the cytoskeleton. Functionally, promotes the migration of muscle-derived satellite cells (MDSCs) during differentiation throught interaction with FMNL2 and therefore may participate in microfilament assembly. This chain is T-complex protein 11-like protein 2, found in Bos taurus (Bovine).